Reading from the N-terminus, the 200-residue chain is Recombination protein RecR (200 aa).

The segment at C59–C74 adopts a C4-type zinc-finger fold. The 96-residue stretch at S82 to P177 folds into the Toprim domain.

The protein belongs to the RecR family.

Its function is as follows. May play a role in DNA repair. It seems to be involved in an RecBC-independent recombinational process of DNA repair. It may act with RecF and RecO. This Phenylobacterium zucineum (strain HLK1) protein is Recombination protein RecR.